We begin with the raw amino-acid sequence, 279 residues long: Large ribosomal subunit protein uL2 (279 aa).

2 disordered regions span residues 34–58 (LRPL…GGGH) and 225–279 (VMNP…KNKR). A compositionally biased stretch (basic and acidic residues) spans 251 to 268 (GKPEGRTRRPNKESDKLI). The segment covering 269–279 (VRRRRTGKNKR) has biased composition (basic residues).

Belongs to the universal ribosomal protein uL2 family. In terms of assembly, part of the 50S ribosomal subunit. Forms a bridge to the 30S subunit in the 70S ribosome.

In terms of biological role, one of the primary rRNA binding proteins. Required for association of the 30S and 50S subunits to form the 70S ribosome, for tRNA binding and peptide bond formation. It has been suggested to have peptidyltransferase activity; this is somewhat controversial. Makes several contacts with the 16S rRNA in the 70S ribosome. The polypeptide is Large ribosomal subunit protein uL2 (Micrococcus luteus (strain ATCC 4698 / DSM 20030 / JCM 1464 / CCM 169 / CCUG 5858 / IAM 1056 / NBRC 3333 / NCIMB 9278 / NCTC 2665 / VKM Ac-2230) (Micrococcus lysodeikticus)).